We begin with the raw amino-acid sequence, 305 residues long: Sulfate adenylyltransferase subunit 2 (305 aa).

The protein belongs to the PAPS reductase family. CysD subfamily. Heterodimer composed of CysD, the smaller subunit, and CysN.

It carries out the reaction sulfate + ATP + H(+) = adenosine 5'-phosphosulfate + diphosphate. Its pathway is sulfur metabolism; hydrogen sulfide biosynthesis; sulfite from sulfate: step 1/3. With CysN forms the ATP sulfurylase (ATPS) that catalyzes the adenylation of sulfate producing adenosine 5'-phosphosulfate (APS) and diphosphate, the first enzymatic step in sulfur assimilation pathway. APS synthesis involves the formation of a high-energy phosphoric-sulfuric acid anhydride bond driven by GTP hydrolysis by CysN coupled to ATP hydrolysis by CysD. The sequence is that of Sulfate adenylyltransferase subunit 2 from Pseudomonas savastanoi pv. phaseolicola (strain 1448A / Race 6) (Pseudomonas syringae pv. phaseolicola (strain 1448A / Race 6)).